An 807-amino-acid polypeptide reads, in one-letter code: Ecotropic viral integration site 5 ortholog (807 aa).

The disordered stretch occupies residues 1-31 (MTLTTTTTASSAESQAKMDVKGGALPGEENL). A Phosphothreonine modification is found at Thr33. 2 positions are modified to phosphoserine: Ser58 and Ser64. In terms of domain architecture, Rab-GAP TBC spans 116 to 300 (GIPHHFRAIV…RIMDVFLSEG (185 aa)). Coiled-coil stretches lie at residues 352 to 463 (SIKL…ENNV), 494 to 583 (CLLE…ENQR), and 627 to 772 (REME…RGKF).

Interacts with Rab11.

The protein resides in the cytoplasm. Its subcellular location is the endosome. In terms of biological role, functions as a GTPase-activating protein (GAP). During border cell migration in the ovary, acts as a GAP for Rab11 and is necessary for the maintenance of active receptor tyrosine kinases at the leading edge. In Drosophila melanogaster (Fruit fly), this protein is Ecotropic viral integration site 5 ortholog (Evi5).